A 227-amino-acid chain; its full sequence is Ribose-5-phosphate isomerase A (227 aa).

Substrate contacts are provided by residues 28–31 (TGST), 85–88 (DGAD), and 98–101 (KGGG). The Proton acceptor role is filled by Glu-107. Lys-125 lines the substrate pocket.

This sequence belongs to the ribose 5-phosphate isomerase family. In terms of assembly, homodimer.

The enzyme catalyses aldehydo-D-ribose 5-phosphate = D-ribulose 5-phosphate. It participates in carbohydrate degradation; pentose phosphate pathway; D-ribose 5-phosphate from D-ribulose 5-phosphate (non-oxidative stage): step 1/1. In terms of biological role, catalyzes the reversible conversion of ribose-5-phosphate to ribulose 5-phosphate. In Limosilactobacillus reuteri (strain DSM 20016) (Lactobacillus reuteri), this protein is Ribose-5-phosphate isomerase A.